A 230-amino-acid polypeptide reads, in one-letter code: Probable phosphatase IndB (230 aa).

Asp8 (nucleophile) is an active-site residue. Asp8, Asp10, and Asp169 together coordinate Mg(2+). Asp10 acts as the Proton donor in catalysis.

Belongs to the HAD-like hydrolase superfamily. The cofactor is Mg(2+).

Its function is as follows. Part of an operon that could be involved in the biosynthesis of the blue pigment indigoidine, which is implicated in pathogenicity and protection from oxidative stress. This is Probable phosphatase IndB from Dickeya dadantii (strain 3937) (Erwinia chrysanthemi (strain 3937)).